A 140-amino-acid polypeptide reads, in one-letter code: MTIQYTFSMIKPDVIKRNKIGQVNTYLENAGLKIVAQKMKFLTKYEAECFYDEHRARSFFNSLVEYITSGAVVLQVLKGEDAITLNRTIMGATNPAEAKEGTIRKDLGESIEANSIHGSDSENSAKREIKFFFSKSEIIE.

Residues Lys-11, Phe-59, Arg-87, Thr-93, Arg-104, and Asn-114 each coordinate ATP. The active-site Pros-phosphohistidine intermediate is His-117.

Belongs to the NDK family. In terms of assembly, homotetramer. Mg(2+) serves as cofactor.

It is found in the cytoplasm. The catalysed reaction is a 2'-deoxyribonucleoside 5'-diphosphate + ATP = a 2'-deoxyribonucleoside 5'-triphosphate + ADP. It catalyses the reaction a ribonucleoside 5'-diphosphate + ATP = a ribonucleoside 5'-triphosphate + ADP. Functionally, major role in the synthesis of nucleoside triphosphates other than ATP. The ATP gamma phosphate is transferred to the NDP beta phosphate via a ping-pong mechanism, using a phosphorylated active-site intermediate. This Rickettsia prowazekii (strain Madrid E) protein is Nucleoside diphosphate kinase.